The sequence spans 230 residues: ATP phosphoribosyltransferase (230 aa).

This sequence belongs to the ATP phosphoribosyltransferase family. Short subfamily. As to quaternary structure, heteromultimer composed of HisG and HisZ subunits.

The protein localises to the cytoplasm. The enzyme catalyses 1-(5-phospho-beta-D-ribosyl)-ATP + diphosphate = 5-phospho-alpha-D-ribose 1-diphosphate + ATP. It functions in the pathway amino-acid biosynthesis; L-histidine biosynthesis; L-histidine from 5-phospho-alpha-D-ribose 1-diphosphate: step 1/9. In terms of biological role, catalyzes the condensation of ATP and 5-phosphoribose 1-diphosphate to form N'-(5'-phosphoribosyl)-ATP (PR-ATP). Has a crucial role in the pathway because the rate of histidine biosynthesis seems to be controlled primarily by regulation of HisG enzymatic activity. In Agrobacterium fabrum (strain C58 / ATCC 33970) (Agrobacterium tumefaciens (strain C58)), this protein is ATP phosphoribosyltransferase.